We begin with the raw amino-acid sequence, 430 residues long: Cell division protein FtsZ (430 aa).

Residues 76–80 (GGGCN), 163–165 (GTG), glutamate 194, arginine 198, and aspartate 242 each bind GTP. Residues 374-418 (KEKPQAKTSSKPVLSGPPAGVETVPSTTTPEDPLGEIPMAPELDI) are disordered.

It belongs to the FtsZ family. In terms of assembly, homodimer. Polymerizes to form a dynamic ring structure in a strictly GTP-dependent manner. Interacts directly with several other division proteins.

Its subcellular location is the cytoplasm. Essential cell division protein that forms a contractile ring structure (Z ring) at the future cell division site. The regulation of the ring assembly controls the timing and the location of cell division. One of the functions of the FtsZ ring is to recruit other cell division proteins to the septum to produce a new cell wall between the dividing cells. Binds GTP and shows GTPase activity. The protein is Cell division protein FtsZ of Synechocystis sp. (strain ATCC 27184 / PCC 6803 / Kazusa).